Here is a 183-residue protein sequence, read N- to C-terminus: Large ribosomal subunit protein eL18 (183 aa).

The tract at residues 150-183 (RHFGPAPGAPRSHTKPYVRTKGHERARPRRRSNV) is disordered. Residues 161-183 (SHTKPYVRTKGHERARPRRRSNV) are compositionally biased toward basic residues.

It belongs to the eukaryotic ribosomal protein eL18 family.

Its subcellular location is the cytoplasm. This chain is Large ribosomal subunit protein eL18 (RpL18), found in Spodoptera frugiperda (Fall armyworm).